The following is a 451-amino-acid chain: Threonylcarbamoyladenosine tRNA methylthiotransferase MtaB (451 aa).

Positions 2 to 114 constitute an MTTase N-terminal domain; that stretch reads ATVAFHTLGC…MLGYIDQYRE (113 aa). Residues Cys11, Cys47, Cys78, Cys153, Cys157, and Cys160 each contribute to the [4Fe-4S] cluster site. The region spanning 139–369 is the Radical SAM core domain; the sequence is FTDRTRASLK…IALSDQLAKE (231 aa). The region spanning 372–437 is the TRAM domain; it reads SQYENEVLEI…YPYNEGQFVR (66 aa).

It belongs to the methylthiotransferase family. MtaB subfamily. [4Fe-4S] cluster is required as a cofactor.

It is found in the cytoplasm. It catalyses the reaction N(6)-L-threonylcarbamoyladenosine(37) in tRNA + (sulfur carrier)-SH + AH2 + 2 S-adenosyl-L-methionine = 2-methylsulfanyl-N(6)-L-threonylcarbamoyladenosine(37) in tRNA + (sulfur carrier)-H + 5'-deoxyadenosine + L-methionine + A + S-adenosyl-L-homocysteine + 2 H(+). Catalyzes the methylthiolation of N6-threonylcarbamoyladenosine (t(6)A), leading to the formation of 2-methylthio-N6-threonylcarbamoyladenosine (ms(2)t(6)A) at position 37 in tRNAs that read codons beginning with adenine. The polypeptide is Threonylcarbamoyladenosine tRNA methylthiotransferase MtaB (mtaB) (Bacillus subtilis (strain 168)).